The following is a 347-amino-acid chain: GMP reductase (347 aa).

Residue 108 to 131 (ADFEKTVQILALDPALNFVCIDVA) participates in NADP(+) binding. K(+)-binding residues include Gly181 and Gly183. Cys186 (thioimidate intermediate) is an active-site residue. Residue 216 to 239 (IVSDGGCTMPGDVAKAFGGGADFV) participates in NADP(+) binding.

This sequence belongs to the IMPDH/GMPR family. GuaC type 1 subfamily. In terms of assembly, homotetramer.

It catalyses the reaction IMP + NH4(+) + NADP(+) = GMP + NADPH + 2 H(+). In terms of biological role, catalyzes the irreversible NADPH-dependent deamination of GMP to IMP. It functions in the conversion of nucleobase, nucleoside and nucleotide derivatives of G to A nucleotides, and in maintaining the intracellular balance of A and G nucleotides. This Salmonella paratyphi B (strain ATCC BAA-1250 / SPB7) protein is GMP reductase.